The primary structure comprises 540 residues: Mitochondrial distribution and morphology protein 34 (540 aa).

One can recognise an SMP-LTD domain in the interval 1–208; it reads MSFKFNSGTF…LPSVIFNMSQ (208 aa). 2 disordered regions span residues 26-51 and 379-399; these read ALNP…KKPK and RSKS…SGSL. A compositionally biased stretch (polar residues) spans 35 to 44; that stretch reads PESTSGQDGS.

It belongs to the MDM34 family. As to quaternary structure, component of the ER-mitochondria encounter structure (ERMES) or MDM complex, composed of MMM1, MDM10, MDM12 and MDM34.

Its subcellular location is the mitochondrion outer membrane. Component of the ERMES/MDM complex, which serves as a molecular tether to connect the endoplasmic reticulum (ER) and mitochondria. Components of this complex are involved in the control of mitochondrial shape and protein biogenesis, and function in nonvesicular lipid trafficking between the ER and mitochondria. MDM34 is required for the interaction of the ER-resident membrane protein MMM1 and the outer mitochondrial membrane-resident beta-barrel protein MDM10. The protein is Mitochondrial distribution and morphology protein 34 of Kluyveromyces lactis (strain ATCC 8585 / CBS 2359 / DSM 70799 / NBRC 1267 / NRRL Y-1140 / WM37) (Yeast).